The primary structure comprises 196 residues: Holliday junction branch migration complex subunit RuvA (196 aa).

Residues 1–63 are domain I; that stretch reads MINKIHGKVI…ENELKLFGFL (63 aa). Positions 64–139 are domain II; it reads NSDERETFKS…KLLINNELES (76 aa). Position 139 (Ser139) is a region of interest, flexible linker. The interval 139–196 is domain III; sequence SSLFGFKELEESIVSMGFDRKIVNSKLKEACDLIEFSNLKDSEKEQFLFKEVLKRMSN.

This sequence belongs to the RuvA family. In terms of assembly, homotetramer. Forms an RuvA(8)-RuvB(12)-Holliday junction (HJ) complex. HJ DNA is sandwiched between 2 RuvA tetramers; dsDNA enters through RuvA and exits via RuvB. An RuvB hexamer assembles on each DNA strand where it exits the tetramer. Each RuvB hexamer is contacted by two RuvA subunits (via domain III) on 2 adjacent RuvB subunits; this complex drives branch migration. In the full resolvosome a probable DNA-RuvA(4)-RuvB(12)-RuvC(2) complex forms which resolves the HJ.

The protein localises to the cytoplasm. Its function is as follows. The RuvA-RuvB-RuvC complex processes Holliday junction (HJ) DNA during genetic recombination and DNA repair, while the RuvA-RuvB complex plays an important role in the rescue of blocked DNA replication forks via replication fork reversal (RFR). RuvA specifically binds to HJ cruciform DNA, conferring on it an open structure. The RuvB hexamer acts as an ATP-dependent pump, pulling dsDNA into and through the RuvAB complex. HJ branch migration allows RuvC to scan DNA until it finds its consensus sequence, where it cleaves and resolves the cruciform DNA. This Borrelia garinii subsp. bavariensis (strain ATCC BAA-2496 / DSM 23469 / PBi) (Borreliella bavariensis) protein is Holliday junction branch migration complex subunit RuvA.